Reading from the N-terminus, the 860-residue chain is Nuclear pore complex protein NUP93B (860 aa).

The protein belongs to the nucleoporin interacting component (NIC) family. In terms of assembly, part of the nuclear pore complex (NPC). The NPC has an eight-fold symmetrical structure comprising a central transport channel and two rings, the cytoplasmic and nuclear rings, to which eight filaments are attached. The cytoplasmic filaments have loose ends, while the nuclear filaments are joined in a distal ring, forming a nuclear basket. NPCs are highly dynamic in configuration and composition, and can be devided in 3 subcomplexes, the NUP62 subcomplex, the NUP107-160 subcomplex and the NUP93 subcomplex, containing approximately 30 different nucleoporin proteins.

It is found in the nucleus envelope. It localises to the nucleus. The protein localises to the nuclear pore complex. The chain is Nuclear pore complex protein NUP93B from Arabidopsis thaliana (Mouse-ear cress).